The following is a 105-amino-acid chain: Nitrogen fixation nifHD region GlnB-like protein 1 (105 aa).

The protein belongs to the P(II) protein family.

In terms of biological role, could be involved in the regulation of nitrogen fixation. The sequence is that of Nitrogen fixation nifHD region GlnB-like protein 1 (glnBA) from Methanothermococcus thermolithotrophicus (Methanococcus thermolithotrophicus).